Here is a 394-residue protein sequence, read N- to C-terminus: MAKEKFERVKPHVNVGTIGHVDHGKTTLTAAISSVLTKTYGGTKRDFAQIDNAPEERERGITINTSHIEYDTPARHYAHVDCPGHADYVKNMITGAAQMDGAILVVASTDGPMPQTREHILLSRQVGVPFIIVFMNKCDMVDDEELLELVEMEVRELLSEYDFPGDDLPVIQGSALKALEGEPEWEAKILELAEALDTYIPEPERAIDGAFILPIEDVFSIAGRGTVVTGRVERGIVRVGDEVEIVGIKDTTKSTCTGVEMFRKLLDEGRAGENCGVLLRGIKREDVERGQVLAAPGSITPHTTFKSEIYVLSKEEGGRHTPFFKGYRPQFYFRTTDVTGTIELPEGVEMVMPGDNVAMTVTLIAPIAMDEGLRFAIREGGRTVGAGVVAEIVA.

The tr-type G domain occupies 10–204 (KPHVNVGTIG…ALDTYIPEPE (195 aa)). The interval 19-26 (GHVDHGKT) is G1. A GTP-binding site is contributed by 19–26 (GHVDHGKT). Residue Thr-26 coordinates Mg(2+). Positions 60 to 64 (GITIN) are G2. A G3 region spans residues 81-84 (DCPG). Residues 81 to 85 (DCPGH) and 136 to 139 (NKCD) contribute to the GTP site. The segment at 136–139 (NKCD) is G4. Positions 174-176 (SAL) are G5.

This sequence belongs to the TRAFAC class translation factor GTPase superfamily. Classic translation factor GTPase family. EF-Tu/EF-1A subfamily. As to quaternary structure, monomer.

It is found in the cytoplasm. It catalyses the reaction GTP + H2O = GDP + phosphate + H(+). Its function is as follows. GTP hydrolase that promotes the GTP-dependent binding of aminoacyl-tRNA to the A-site of ribosomes during protein biosynthesis. The sequence is that of Elongation factor Tu from Shewanella halifaxensis (strain HAW-EB4).